The primary structure comprises 562 residues: Long-chain-fatty-acid--CoA ligase (562 aa).

Belongs to the ATP-dependent AMP-binding enzyme family. Mg(2+) serves as cofactor.

The protein resides in the membrane. It carries out the reaction a long-chain fatty acid + ATP + CoA = a long-chain fatty acyl-CoA + AMP + diphosphate. The protein operates within lipid metabolism; fatty acid beta-oxidation. Catalyzes the esterification, concomitant with transport, of exogenous long-chain fatty acids into metabolically active CoA thioesters for subsequent degradation or incorporation into phospholipids. This is Long-chain-fatty-acid--CoA ligase (fadD) from Haemophilus influenzae (strain ATCC 51907 / DSM 11121 / KW20 / Rd).